Consider the following 309-residue polypeptide: tRNA pseudouridine synthase B (309 aa).

Residue D51 is the Nucleophile of the active site.

It belongs to the pseudouridine synthase TruB family. Type 1 subfamily.

The enzyme catalyses uridine(55) in tRNA = pseudouridine(55) in tRNA. Its function is as follows. Responsible for synthesis of pseudouridine from uracil-55 in the psi GC loop of transfer RNAs. The chain is tRNA pseudouridine synthase B from Coxiella burnetii (strain Dugway 5J108-111).